Reading from the N-terminus, the 1220-residue chain is DNA-directed RNA polymerase subunit beta' (1220 aa).

Zn(2+)-binding residues include C60, C62, C75, and C78. Residues D449, D451, and D453 each coordinate Mg(2+). Residues C818, C892, C899, and C902 each coordinate Zn(2+).

The protein belongs to the RNA polymerase beta' chain family. The RNAP catalytic core consists of 2 alpha, 1 beta, 1 beta' and 1 omega subunit. When a sigma factor is associated with the core the holoenzyme is formed, which can initiate transcription. Requires Mg(2+) as cofactor. Zn(2+) serves as cofactor.

It carries out the reaction RNA(n) + a ribonucleoside 5'-triphosphate = RNA(n+1) + diphosphate. Functionally, DNA-dependent RNA polymerase catalyzes the transcription of DNA into RNA using the four ribonucleoside triphosphates as substrates. This is DNA-directed RNA polymerase subunit beta' from Lacticaseibacillus paracasei (strain ATCC 334 / BCRC 17002 / CCUG 31169 / CIP 107868 / KCTC 3260 / NRRL B-441) (Lactobacillus paracasei).